A 392-amino-acid chain; its full sequence is uncharacterized protein (392 aa).

It belongs to the glycosyltransferase 2 family.

This is an uncharacterized protein from Bacillus subtilis (strain 168).